Reading from the N-terminus, the 762-residue chain is Putative cation exchanger YDL206W (762 aa).

The signal sequence occupies residues 1–26; sequence MHKPLRWLITIAFYVSNVILIGYSLS. Topologically, residues 27–30 are extracellular; the sequence is SNGS. Residue asparagine 28 is glycosylated (N-linked (GlcNAc...) asparagine). A helical membrane pass occupies residues 31–51; it reads ISEFYLHSVVLIECFSLLGVV. At 52 to 102 the chain is on the cytoplasmic side; that stretch reads TSDCLTPSLSYISSNIFHISDRVSGMTLLALGNALPDITSTYQSMKSGVTS. Residues 103–123 traverse the membrane as a helical segment; it reads LAIGELFGGIFFLLTVVIGLM. The Extracellular segment spans residues 124–156; the sequence is GCVATIQFQHDKSIETYTEESFDQNLSYDRSNY. An N-linked (GlcNAc...) asparagine glycan is attached at asparagine 148. Residues 157 to 177 traverse the membrane as a helical segment; the sequence is ILDVGIFTFMLLVSGTFLADG. Residue arginine 178 is a topological domain, cytoplasmic. The helical transmembrane segment at 179–199 threads the bilayer; sequence LYFWECIVMVLTYCCCAVYLI. The Extracellular portion of the chain corresponds to 200 to 501; sequence KSYKYPCEIN…YNYLTDVSLE (302 aa). N-linked (GlcNAc...) asparagine glycans are attached at residues asparagine 280 and asparagine 329. Residues 502–522 traverse the membrane as a helical segment; sequence IGFFEFLSLLVTTPVSIILYL. Topologically, residues 523–554 are cytoplasmic; the sequence is SIPSEISQTDHDLPLSYLQNIQLIASPIILNQ. The chain crosses the membrane as a helical span at residues 555-575; it reads LITNNFSFWLLILSLVIAILL. The Extracellular portion of the chain corresponds to 576–589; that stretch reads YFKTRTIPNKFNSD. Residues 590–610 traverse the membrane as a helical segment; it reads IIFTVAFLLSLACLSKAVHII. Residues 611–615 are Cytoplasmic-facing; sequence VVTLT. The helical transmembrane segment at 616-636 threads the bilayer; sequence HWINVFNISETILGLTIFTWG. Residues 637 to 650 lie on the Extracellular side of the membrane; the sequence is NSIGDLVSNITFVK. Residue asparagine 645 is glycosylated (N-linked (GlcNAc...) asparagine). The helical transmembrane segment at 651 to 671 threads the bilayer; it reads IGVLEIAIGACFGSPLLYFLF. The Cytoplasmic segment spans residues 672-709; sequence GVGFDGIMIMLGDKTGKIVSGRDSNILMHHIDFKVDKN. Residues 710–730 form a helical membrane-spanning segment; sequence LINTGVGILIAFLIFTVLIPL. Over 731–738 the chain is Extracellular; it reads NDWKIDKK. A helical transmembrane segment spans residues 739 to 759; it reads ISIALLTLYIVVTCISVFLEV. At 760–762 the chain is on the cytoplasmic side; it reads HQV.

The protein belongs to the Ca(2+):cation antiporter (CaCA) (TC 2.A.19) family.

Its subcellular location is the membrane. Putative cation exchanger. The polypeptide is Putative cation exchanger YDL206W (Saccharomyces cerevisiae (strain ATCC 204508 / S288c) (Baker's yeast)).